We begin with the raw amino-acid sequence, 950 residues long: Voltage-gated inwardly rectifying potassium channel KCNH6 (950 aa).

At 1–261 (MPVRRGHVAP…YSPFKAVWDW (261 aa)) the chain is on the cytoplasmic side. The PAS domain occupies 41–70 (IIYCNDGFCELFGYSRVEVMQRPCTCDFLT). The PAC domain maps to 92 to 144 (CKVDILYYRKDASSFRCLVDVVPVKNEDGAVIMFILNFEDLAQLLAKSSSRSL). The interval 154 to 174 (LGSEGSHSRPSGQGPGPGRGK) is disordered. The chain crosses the membrane as a helical span at residues 262–282 (LILLLVIYTAVFTPYSAAFLL). The Extracellular portion of the chain corresponds to 283-298 (SDQDESQRGTCGYTCS). A helical transmembrane segment spans residues 299-319 (PLTVVDLIVDIMFVVDIVINF). At 320–340 (RTTYVNTNDEVVSHPRRIAVH) the chain is on the cytoplasmic side. Residues 341–361 (YFKGWFLIDMVAAIPFDLLIF) form a helical membrane-spanning segment. Residues 362-370 (RTGSDETTT) are Extracellular-facing. A helical; Voltage-sensor transmembrane segment spans residues 371-391 (LIGLLKTARLLRLVRVARKLD). Over 392 to 398 (RYSEYGA) the chain is Cytoplasmic. A helical transmembrane segment spans residues 399 to 419 (AVLFLLMCTFALIAHWLACIW). Residues 420 to 463 (YAIGNVERPYLEPKIGWLDSLGAQLGKQYNGSDPASGPSVQDKY) are Extracellular-facing. The segment at residues 464-484 (VTALYFTFSSLTSVGFGNVSP) is an intramembrane region (pore-forming). Residues 476-481 (SVGFGN) carry the Selectivity filter motif. Residues 485 to 490 (NTNSEK) lie on the Extracellular side of the membrane. The chain crosses the membrane as a helical span at residues 491–511 (VFSICVMLIGSLMYASIFGNV). At 512 to 950 (SAIIQRLYSG…HGSDPGFTRS (439 aa)) the chain is on the cytoplasmic side. Residues 594 to 694 (AFRGASKGCL…IHRADLLEVL (101 aa)) are cNMP-binding domain. Disordered regions lie at residues 719–750 (GGLQ…APSL) and 890–950 (VPSS…FTRS). The segment covering 740-750 (NDSQSGAAPSL) has biased composition (polar residues). Residues 898–912 (PGGLLSPLASPLRPL) are compositionally biased toward low complexity.

Belongs to the potassium channel family. H (Eag) (TC 1.A.1.20) subfamily. Kv11.2/KCNH6 sub-subfamily. In terms of assembly, the potassium channel is probably composed of a homo- or heterotetrameric complex of pore-forming alpha subunits that can associate only within their subfamily. In terms of tissue distribution, highly expressed in celiac and superior mesenteric ganglia, but not detected in brain or in heart. Detected at low levels in retina. Also found in pituitary. Also found in the olfactory bulb (granular and mitral cell layers).

Its subcellular location is the cell membrane. It catalyses the reaction K(+)(in) = K(+)(out). Its function is as follows. Pore-forming (alpha) subunit of voltage-gated inwardly rectifying potassium channel. Characterized by unusual gating kinetics by producing relatively small outward currents during membrane depolarization and large inward currents during subsequent repolarization which reflect a rapid inactivation during depolarization and quick recovery from inactivation but slow deactivation (closing) during repolarization. Activates even more slowly than KCNH2. The polypeptide is Voltage-gated inwardly rectifying potassium channel KCNH6 (Rattus norvegicus (Rat)).